A 710-amino-acid polypeptide reads, in one-letter code: Early transcription factor 82 kDa subunit (710 aa).

The protein belongs to the poxviridae VETF large subunit family. As to quaternary structure, heterodimer of a 70 kDa and a 82 kDa subunit. Part of the early transcription complex composed of ETF, RAP94/OPG109, and the DNA-directed RNA polymerase.

It is found in the virion. In terms of biological role, acts with RNA polymerase to initiate transcription from early gene promoters. Is recruited by the RPO-associated protein of 94 kDa RAP94/OPG109 to form the early transcription complex, which also contains the core RNA polymerase. ETF heterodimer binds to early gene promoters. The sequence is that of Early transcription factor 82 kDa subunit (OPG133) from Monkeypox virus.